We begin with the raw amino-acid sequence, 284 residues long: Ribosomal RNA small subunit methyltransferase A (284 aa).

Residues N27, L29, G54, E75, D100, and N125 each contribute to the S-adenosyl-L-methionine site.

The protein belongs to the class I-like SAM-binding methyltransferase superfamily. rRNA adenine N(6)-methyltransferase family. RsmA subfamily.

The protein localises to the cytoplasm. It carries out the reaction adenosine(1518)/adenosine(1519) in 16S rRNA + 4 S-adenosyl-L-methionine = N(6)-dimethyladenosine(1518)/N(6)-dimethyladenosine(1519) in 16S rRNA + 4 S-adenosyl-L-homocysteine + 4 H(+). In terms of biological role, specifically dimethylates two adjacent adenosines (A1518 and A1519) in the loop of a conserved hairpin near the 3'-end of 16S rRNA in the 30S particle. May play a critical role in biogenesis of 30S subunits. This Protochlamydia amoebophila (strain UWE25) protein is Ribosomal RNA small subunit methyltransferase A.